A 391-amino-acid chain; its full sequence is MAIINMSDLDLQGKRVLIREDLNVPVSNGVVTSDARLRASLPTIELALAKGAAVMVMSHLGRPTEGEYNPEYSMQPVVDYLAKALSCPVRLATDYLDGVDVAVGEVVVFENVRFNVGEGKNNEALSKKMAALCDVYVMDAFGTAHRAQASTHGVGMFAPIACAGPLLAQELDALGKALDNPARPMVAIVGGSKVSTKLTVLESLSGIVDQLVVGGGIANTFIAAAGYNVGKSLYEADLIDEAKRLVANAKSRGADIPVPTDVVVAGEFSPTAAATLKSVSEVADGEMIFDIGPDSAEALAKIIESAGTIVWNGPVGVFEFDQFGEGTKRIAQAIADSKAFSIAGGGDTLAAVDKYGIADKVSYISTGGGAFLEFLEGKELPAVAMLEKRGA.

Substrate-binding positions include 21–23, Arg36, 59–62, Arg113, and Arg146; these read DLN and HLGR. Residues Lys197, Glu319, and 345 to 348 contribute to the ATP site; that span reads GGDT.

The protein belongs to the phosphoglycerate kinase family. As to quaternary structure, monomer.

Its subcellular location is the cytoplasm. The enzyme catalyses (2R)-3-phosphoglycerate + ATP = (2R)-3-phospho-glyceroyl phosphate + ADP. Its pathway is carbohydrate degradation; glycolysis; pyruvate from D-glyceraldehyde 3-phosphate: step 2/5. The polypeptide is Phosphoglycerate kinase (Shewanella baltica (strain OS223)).